A 369-amino-acid chain; its full sequence is Phosphoribosyl pyrophosphate synthase-associated protein 2 (369 aa).

N-acetylmethionine is present on Met-1. Ser-219, Ser-227, and Ser-233 each carry phosphoserine.

This sequence belongs to the ribose-phosphate pyrophosphokinase family. Binds to PRPS1 and PRPS2. In terms of tissue distribution, ubiquitous.

In terms of biological role, seems to play a negative regulatory role in 5-phosphoribose 1-diphosphate synthesis. This is Phosphoribosyl pyrophosphate synthase-associated protein 2 (Prpsap2) from Rattus norvegicus (Rat).